A 1663-amino-acid chain; its full sequence is Cortactin-binding protein 2 (1663 aa).

The segment at 1-26 (MATDGASCEPDLSRAPEDAAGATAEA) is disordered. The stretch at 119-275 (RKMQERMSAQ…IEQLKKGGDS (157 aa)) forms a coiled coil. Disordered regions lie at residues 355–440 (SIDR…LHPG) and 454–478 (GNAN…SPTS). A compositionally biased stretch (low complexity) spans 386 to 403 (PSTDSTPDPTSSTPLLSS). Positions 404–422 (NAAPPTAQTPGITPQNSQA) are enriched in polar residues. Arginine 498 bears the Asymmetric dimethylarginine mark. The interval 499–614 (FTGPQAGAPP…KSSSPQLPPK (116 aa)) is disordered. Residues 583 to 593 (TVASPPSSLPQ) are compositionally biased toward polar residues. 5 ANK repeats span residues 709 to 739 (GRPT…DINY), 743 to 772 (DGHS…QVNA), 776 to 805 (NGFT…NINH), 809 to 838 (GGQT…DRCV), and 842 to 871 (DGWT…PAHG). The tract at residues 872–897 (NSFSEEESESGVFDLDGEEESPEGKS) is disordered. A compositionally biased stretch (acidic residues) spans 875–892 (SEEESESGVFDLDGEEES). The ANK 6 repeat unit spans residues 912 to 942 (EGWTAAHIAAAKGFKNCLEILCRHGGLEPER). A disordered region spans residues 1446-1482 (SKKKGESGAWRKVNTSPRRKSGRFSLPTWNKPDLSTE). Residue serine 1524 is modified to Phosphoserine. The disordered stretch occupies residues 1617-1663 (RSKVTQCSQNTKSSSSSSNTRQIEINNNSKEENWNLHKNEHLEKANK). Polar residues-rich tracts occupy residues 1619 to 1628 (KVTQCSQNTK) and 1635 to 1644 (NTRQIEINNN). Basic and acidic residues predominate over residues 1645-1663 (SKEENWNLHKNEHLEKANK).

As to quaternary structure, interacts with CTTN/cortactin SH3 domain. Interacts with STRN, STRN4/zinedin and MOB4/phocein; this interactions mediate the association with the STRIPAK core complex and may regulate dendritic spine distribution of the STRIPAK complex in hippocampal neurons. Activation of glutamate receptors weakens the interaction with STRN and STRN4.

It is found in the cytoplasm. It localises to the cell cortex. The protein resides in the cell projection. Its subcellular location is the dendritic spine. Regulates the dendritic spine distribution of CTTN/cortactin in hippocampal neurons, and thus controls dendritic spinogenesis and dendritic spine maintenance. Associates with the striatin-interacting phosphatase and kinase (STRIPAK) core complex to regulate dendritic spine distribution of the STRIPAK complex in hippocampal neurons. The protein is Cortactin-binding protein 2 (CTTNBP2) of Plecturocebus moloch (Dusky titi monkey).